Reading from the N-terminus, the 446-residue chain is MREIVHLQTGQCGNQIGAAFWQTISGEHGLDSNGVYNGTSELQLERMSVYFNERSGNKYVPRAVLVDLEPGTMDAVRAGPFGQLFRPDNFVFGQSGAGNNWAKGHYTEGAELVDQVLDVVRREAEGCDCLQGFQITHSLGGGTGAGMGTLLISKIREEFPDRMMATFSVVPSPKVSDTVVEPYNATLSVHQLVENSDETFCIDNEALYDICMRTLKLSNPSYGDLNYLVSAVMSGVTTCLRFPGQLNSDLRKLAVNMVPFPRLHFFMVGFAPLTSRGAHSFRAVSVPELTQQMFDPKNMMAASDFRNGRYLTCSAIFRGRVAMKEVEDQMRNVQNKNSSYFVEWIPNNIQTALCAIPPRGLTMSSTFIGNSTSIQELFKRVGEQFTAMFRRKAFLHWYTGEGMDEMEFTEAESNMNDLVSEYQQYQDAGIDEEEEEYEEELPEGEE.

8 residues coordinate GTP: Q11, E69, S138, G142, T143, G144, N204, and N226. E69 provides a ligand contact to Mg(2+). The segment at E421–E446 is disordered. Over residues G429–E446 the composition is skewed to acidic residues.

The protein belongs to the tubulin family. Dimer of alpha and beta chains. A typical microtubule is a hollow water-filled tube with an outer diameter of 25 nm and an inner diameter of 15 nM. Alpha-beta heterodimers associate head-to-tail to form protofilaments running lengthwise along the microtubule wall with the beta-tubulin subunit facing the microtubule plus end conferring a structural polarity. Microtubules usually have 13 protofilaments but different protofilament numbers can be found in some organisms and specialized cells. It depends on Mg(2+) as a cofactor.

It localises to the cytoplasm. Its subcellular location is the cytoskeleton. In terms of biological role, tubulin is the major constituent of microtubules, a cylinder consisting of laterally associated linear protofilaments composed of alpha- and beta-tubulin heterodimers. Microtubules grow by the addition of GTP-tubulin dimers to the microtubule end, where a stabilizing cap forms. Below the cap, tubulin dimers are in GDP-bound state, owing to GTPase activity of alpha-tubulin. This chain is Tubulin beta chain (TUB2), found in Fusarium fujikuroi (Bakanae and foot rot disease fungus).